A 350-amino-acid polypeptide reads, in one-letter code: Ion-translocating oxidoreductase complex subunit D (350 aa).

A run of 4 helical transmembrane segments spans residues isoleucine 20–glycine 40, glycine 42–leucine 62, isoleucine 89–alanine 109, and proline 123–leucine 143. An FMN phosphoryl threonine modification is found at threonine 187. A run of 5 helical transmembrane segments spans residues valine 214–leucine 234, tryptophan 242–phenylalanine 262, leucine 267–leucine 287, leucine 301–proline 321, and aspartate 322–threonine 342.

Belongs to the NqrB/RnfD family. The complex is composed of six subunits: RnfA, RnfB, RnfC, RnfD, RnfE and RnfG. Requires FMN as cofactor.

The protein resides in the cell inner membrane. In terms of biological role, part of a membrane-bound complex that couples electron transfer with translocation of ions across the membrane. This is Ion-translocating oxidoreductase complex subunit D from Klebsiella pneumoniae (strain 342).